Here is a 241-residue protein sequence, read N- to C-terminus: Carboxy-S-adenosyl-L-methionine synthase 1 (241 aa).

Residues tyrosine 37, 61 to 63, asparagine 131, and arginine 198 contribute to the S-adenosyl-L-methionine site; that span reads GCS.

It belongs to the class I-like SAM-binding methyltransferase superfamily. Cx-SAM synthase family. Homodimer.

The enzyme catalyses prephenate + S-adenosyl-L-methionine = carboxy-S-adenosyl-L-methionine + 3-phenylpyruvate + H2O. Catalyzes the conversion of S-adenosyl-L-methionine (SAM) to carboxy-S-adenosyl-L-methionine (Cx-SAM). The polypeptide is Carboxy-S-adenosyl-L-methionine synthase 1 (Yersinia pseudotuberculosis serotype IB (strain PB1/+)).